The primary structure comprises 436 residues: Serine/threonine-protein kinase STK11 (436 aa).

Phosphoserine is present on Ser31. An N6-acetyllysine mark is found at Lys44 and Lys48. The interval 45-90 (LIGKYLMGDLLGEGSYGKVKEVLDSETLCRRAVKILKKKKLRRIPN) is sufficient for interaction with SIRT1. Positions 49–309 (YLMGDLLGEG…IRQIRQHSWF (261 aa)) constitute a Protein kinase domain. ATP is bound by residues 55–63 (LGEGSYGKV) and Lys78. Residues Lys96 and Lys97 each carry the N6-acetyllysine modification. Asp176 acts as the Proton acceptor in catalysis. At Thr189 the chain carries Phosphothreonine; by autocatalysis. Residues Lys296 and Lys311 each carry the N6-acetyllysine modification. A Phosphoserine modification is found at Ser325. Residue Thr336 is modified to Phosphothreonine; by autocatalysis. Thr366 bears the Phosphothreonine; by ATM and autocatalysis mark. Positions 398–421 (TEPQLSSKVKPEGRPGTANPARKV) are disordered. A Phosphoserine modification is found at Ser403. Lys420 is subject to N6-acetyllysine. Residue Cys422 is the site of S-palmitoyl cysteine attachment. Lys426 carries the N6-acetyllysine modification. Ser431 carries the phosphoserine; by autocatalysis, PKA, PKC/PRKCZ and RPS6KA1 modification. A Cysteine methyl ester modification is found at Cys433. Cys433 carries the S-farnesyl cysteine lipid modification. An N6-acetyllysine modification is found at Lys434. Residues 434 to 436 (KQQ) constitute a propeptide, removed in mature form.

Belongs to the protein kinase superfamily. CAMK Ser/Thr protein kinase family. LKB1 subfamily. As to quaternary structure, catalytic component of a trimeric complex composed of STK11/LKB1, STRAD (STRADA or STRADB) and CAB39/MO25 (CAB39/MO25alpha or CAB39L/MO25beta): the complex tethers STK11/LKB1 in the cytoplasm and stimulates its catalytic activity. Found in a ternary complex composed of SMAD4, STK11/LKB1 and STK11IP. Interacts with p53/TP53, SMAD4, STK11IP and WDR6. Interacts with NR4A1. Interacts with NISCH; this interaction may increase STK11 activity. Interacts with PTEN, leading to PTEN phosphorylation. Interacts with SIRT1; the interaction deacetylates STK11. Interacts with CDKN1A. It depends on Mg(2+) as a cofactor. The cofactor is Mn(2+). In terms of processing, phosphorylated by ATM at Thr-366 following ionizing radiation (IR). Phosphorylation at Ser-431 by RPS6KA1 and/or some PKA is required to inhibit cell growth. Phosphorylation at Ser-431 is also required during neuronal polarization to mediate phosphorylation of BRSK1 and BRSK2. Phosphorylation by PKC/PRKCZ at Ser-399 in isoform 2 promotes metformin (or peroxynitrite)-induced nuclear export of STK11 and activation of AMPK. UV radiation-induced phosphorylation at Thr-366 mediates CDKN1A degradation. Acetylated. Deacetylation at Lys-48 enhances cytoplasmic localization and kinase activity in vitro. Widely expressed. In terms of tissue distribution, predominantly expressed in testis (at protein level). As to expression, expressed in adult brain and liver and absent from tissues derived from postnatal day 7.

The protein resides in the nucleus. It localises to the cytoplasm. The protein localises to the membrane. It is found in the mitochondrion. The enzyme catalyses L-seryl-[protein] + ATP = O-phospho-L-seryl-[protein] + ADP + H(+). The catalysed reaction is L-threonyl-[protein] + ATP = O-phospho-L-threonyl-[protein] + ADP + H(+). Its activity is regulated as follows. Activated by forming a complex with STRAD (STRADA or STRADB) and CAB39/MO25 (CAB39/MO25alpha or CAB39L/MO25beta): STRADA (or STRADB)-binding promotes a conformational change of STK11/LKB1 in an active conformation, which is stabilized by CAB39/MO25alpha (or CAB39L/MO25beta) interacting with the STK11/LKB1 activation loop. Sequestration in the nucleus by NR4A1 prevents it from phosphorylating and activating cytoplasmic AMPK. Its function is as follows. Tumor suppressor serine/threonine-protein kinase that controls the activity of AMP-activated protein kinase (AMPK) family members, thereby playing a role in various processes such as cell metabolism, cell polarity, apoptosis and DNA damage response. Acts by phosphorylating the T-loop of AMPK family proteins, thus promoting their activity: phosphorylates PRKAA1, PRKAA2, BRSK1, BRSK2, MARK1, MARK2, MARK3, MARK4, NUAK1, NUAK2, SIK1, SIK2, SIK3 and SNRK but not MELK. Also phosphorylates non-AMPK family proteins such as STRADA, PTEN and possibly p53/TP53. Acts as a key upstream regulator of AMPK by mediating phosphorylation and activation of AMPK catalytic subunits PRKAA1 and PRKAA2 and thereby regulates processes including: inhibition of signaling pathways that promote cell growth and proliferation when energy levels are low, glucose homeostasis in liver, activation of autophagy when cells undergo nutrient deprivation, and B-cell differentiation in the germinal center in response to DNA damage. Also acts as a regulator of cellular polarity by remodeling the actin cytoskeleton. Required for cortical neuron polarization by mediating phosphorylation and activation of BRSK1 and BRSK2, leading to axon initiation and specification. Involved in DNA damage response: interacts with p53/TP53 and recruited to the CDKN1A/WAF1 promoter to participate in transcription activation. Able to phosphorylate p53/TP53; the relevance of such result in vivo is however unclear and phosphorylation may be indirect and mediated by downstream STK11/LKB1 kinase NUAK1. Also acts as a mediator of p53/TP53-dependent apoptosis via interaction with p53/TP53: translocates to the mitochondrion during apoptosis and regulates p53/TP53-dependent apoptosis pathways. Regulates UV radiation-induced DNA damage response mediated by CDKN1A. In association with NUAK1, phosphorylates CDKN1A in response to UV radiation and contributes to its degradation which is necessary for optimal DNA repair. Functionally, has a role in spermiogenesis. This chain is Serine/threonine-protein kinase STK11, found in Mus musculus (Mouse).